The following is a 129-amino-acid chain: Glycine cleavage system H protein (129 aa).

The Lipoyl-binding domain maps to 24 to 106 (TVVVGVTSYA…YGDGWLIKVR (83 aa)). Lys65 carries the post-translational modification N6-lipoyllysine.

The protein belongs to the GcvH family. The glycine cleavage system is composed of four proteins: P, T, L and H. (R)-lipoate serves as cofactor.

Functionally, the glycine cleavage system catalyzes the degradation of glycine. The H protein shuttles the methylamine group of glycine from the P protein to the T protein. In Gloeobacter violaceus (strain ATCC 29082 / PCC 7421), this protein is Glycine cleavage system H protein.